The primary structure comprises 182 residues: UPF0397 protein VV2_1534 (182 aa).

The next 5 membrane-spanning stretches (helical) occupy residues 8–28 (VVVI…MFGI), 41–61 (AVLA…VGFI), 72–92 (WGVW…IGLF), 110–130 (FSLF…CSAF), and 146–166 (QLTI…YFIL).

The protein belongs to the UPF0397 family.

It is found in the cell membrane. In Vibrio vulnificus (strain CMCP6), this protein is UPF0397 protein VV2_1534.